We begin with the raw amino-acid sequence, 386 residues long: Succinyl-diaminopimelate desuccinylase (386 aa).

His77 provides a ligand contact to Zn(2+). Residue Asp79 is part of the active site. Position 110 (Asp110) interacts with Zn(2+). The Proton acceptor role is filled by Glu144. Glu145, Glu173, and His359 together coordinate Zn(2+).

It belongs to the peptidase M20A family. DapE subfamily. In terms of assembly, homodimer. It depends on Zn(2+) as a cofactor. The cofactor is Co(2+).

It catalyses the reaction N-succinyl-(2S,6S)-2,6-diaminopimelate + H2O = (2S,6S)-2,6-diaminopimelate + succinate. It participates in amino-acid biosynthesis; L-lysine biosynthesis via DAP pathway; LL-2,6-diaminopimelate from (S)-tetrahydrodipicolinate (succinylase route): step 3/3. Catalyzes the hydrolysis of N-succinyl-L,L-diaminopimelic acid (SDAP), forming succinate and LL-2,6-diaminopimelate (DAP), an intermediate involved in the bacterial biosynthesis of lysine and meso-diaminopimelic acid, an essential component of bacterial cell walls. The sequence is that of Succinyl-diaminopimelate desuccinylase from Ralstonia pickettii (strain 12J).